The chain runs to 933 residues: MSLNTRANIIPEKNTPNEKDYPLREDIRLLGRMLGDTIRELEGETMFNLVETIRQTSVRFRRDQDEAAEHELDTILNHLSHKETIAVVRAFSYFSLLSNIAEDLHHNRRRRAHLRAGSPPQDGSVTLALQRVVKKGIDAEQLQNFFASALISPVLTAHPTEVQRRSILDYQLKIQRLLKERDRTQLTPNEMRHNEEDLRSAIQTLWQTRVLRSVRLTVQDEIENGLIYYHYTFLRQIPYIYAKLEDILERHMDKAAPRIASFLRIGSWIGGDRDGNPFVTHQIMLHAAERHSALILDFYISEVERIGQTMSLSERLIKVSSDLEGLASTAPGLPASRIDEPYRRVFLGIHARLIATSRHLGSSIRGCCQENNAEPYADSAEFVHDLDIVIRSLRQHRSDRLAQGALRDLRRAADVFGFHLAPLDMRQHSKIHEQVISELYEKNTRDDRNYLEMSRSERVEWLLAELRHPRSLVTSFSDFSDVTQGELRILKMAAEIQRRFGHAALPNYIISMATGVVHILEVALLLKEAGLLQFGDDPRSTVNIIPLFETIDDLRGCASVMDELFSLPDYRKLLLSRDNLQEVMLGYSDSNKDGGFVTSNWEIYKAEIELTRVFDRHGVRLRLFHGRGGTVGRGGGPSYQGILAQPPGSVSGQIRLTEQGEVIASKYTDPEIGRRNLETLVAATIESTLLDRDAVHYHAPHYHQIMEELSSSACAAYRDLVYKTPGFKQFFLESTPIREIAGLHIGSRPTSRKPSDKIEDLRAIPWVFSWSLNRTMIPGWYGFGTAVENFVQQAGNEQEALKQLQEMYRTWPFLQTLLSNMDMVLSKSDLGIASRYAELVTDPELRQSVFTSIRTEWELCMKWLFAITGYSELLQDNPTLARSIRIRTPYIDPLNHLQIELLRRYRSGDDDDTVRRAIHLTINGVATGLRNSG.

Active-site residues include His-158 and Lys-592.

This sequence belongs to the PEPCase type 1 family. It depends on Mg(2+) as a cofactor.

The enzyme catalyses oxaloacetate + phosphate = phosphoenolpyruvate + hydrogencarbonate. Functionally, forms oxaloacetate, a four-carbon dicarboxylic acid source for the tricarboxylic acid cycle. This chain is Phosphoenolpyruvate carboxylase, found in Nitrosomonas europaea (strain ATCC 19718 / CIP 103999 / KCTC 2705 / NBRC 14298).